Consider the following 363-residue polypeptide: Ribonuclease P protein subunit p40 (363 aa).

In terms of assembly, component of nuclear RNase P and RNase MRP ribonucleoproteins. RNase P consists of a catalytic RNA moiety and about 10 protein subunits; POP1, POP4, POP5, POP7, RPP14, RPP21, RPP25, RPP30, RPP38 and RPP40. Within the RNase P complex, POP1, POP7 and RPP25 form the 'finger' subcomplex, POP5, RPP14, RPP40 and homodimeric RPP30 form the 'palm' subcomplex, and RPP21, POP4 and RPP38 form the 'wrist' subcomplex. All subunits of the RNase P complex interact with the catalytic RNA. Several subunits of RNase P are also part of the RNase MRP complex. RNase MRP consists of a catalytic RNA moiety and about 8 protein subunits; POP1, POP7, RPP25, RPP30, RPP38, RPP40 and possibly also POP4 and POP5.

It is found in the nucleus. The protein resides in the nucleolus. Component of ribonuclease P, a ribonucleoprotein complex that generates mature tRNA molecules by cleaving their 5'-ends. Also a component of the MRP ribonuclease complex, which cleaves pre-rRNA sequences. In Homo sapiens (Human), this protein is Ribonuclease P protein subunit p40 (RPP40).